The sequence spans 36 residues: Amanexitide proprotein 2 (36 aa).

Positions 1-10 are excised as a propeptide; sequence MSDINATRLP. Positions 11 to 19 form a cross-link, cyclopeptide (Val-Pro); sequence VFSLPVFFP. Positions 20–36 are excised as a propeptide; that stretch reads FVSDDIQAVLTRGESLC.

Belongs to the MSDIN fungal toxin family. Processed by the macrocyclase-peptidase enzyme POPB to yield a toxic cyclic nonapeptide. POPB first removes 10 residues from the N-terminus. Conformational trapping of the remaining peptide forces the enzyme to release this intermediate rather than proceed to macrocyclization. The enzyme rebinds the remaining peptide in a different conformation and catalyzes macrocyclization of the N-terminal 9 residues. As to expression, expressed in basidiocarps.

Cyclic nonapeptide that belongs to the MSDIN-like toxin family responsible for a large number of food poisoning cases and deaths. In Amanita exitialis (Guangzhou destroying angel), this protein is Amanexitide proprotein 2.